Reading from the N-terminus, the 541-residue chain is EH domain-containing protein 4 (541 aa).

Met1 carries the post-translational modification N-acetylmethionine. The tract at residues 1-20 (MFSWMGRQAGGRERSGGMDA) is disordered. Ser15 is modified (phosphoserine). In terms of domain architecture, Dynamin-type G spans 58–289 (FENKPMILLV…DLFRDIQSLP (232 aa)). The segment at 68-75 (GQYSTGKT) is G1 motif. Residue 68 to 75 (GQYSTGKT) coordinates ATP. The G2 motif stretch occupies residues 94 to 95 (EP). Residues 156–159 (DSPG) form a G3 motif region. Ser162 carries the phosphoserine modification. A G4 motif region spans residues 222-225 (NKAD). Lys223 is an ATP binding site. Val246 is a region of interest (G5 motif). Trp261 serves as a coordination point for ATP. The EH domain occupies 447–535 (DKPVYDELFY…PHLVPPSHRK (89 aa)). Position 451 is a phosphotyrosine (Tyr451). Residue Ser459 is modified to Phosphoserine. Residues 479–514 (LPNSVLGKIWKLADCDCDGMLDEEEFALAKHLIKIK) enclose the EF-hand domain. Ca(2+) contacts are provided by Asp492, Asp494, Asp496, Met498, and Glu503.

It belongs to the TRAFAC class dynamin-like GTPase superfamily. Dynamin/Fzo/YdjA family. EHD subfamily. As to quaternary structure, homooligomer, and heterooligomer with EHD1, EHD2 and EHD3. Forms a complex with EHD4 and MICALL1; the complex controls CDH5 trafficking and coordinates angiogenesis.

The protein localises to the early endosome membrane. It is found in the recycling endosome membrane. It localises to the cell membrane. The protein resides in the cell junction. Its subcellular location is the adherens junction. Functionally, ATP- and membrane-binding protein that probably controls membrane reorganization/tubulation upon ATP hydrolysis. Plays a role in early endosomal transport. During sprouting angiogenesis, in complex with PACSIN2 and MICALL1, forms recycling endosome-like tubular structure at asymmetric adherens junctions to control CDH5 trafficking. In Mus musculus (Mouse), this protein is EH domain-containing protein 4.